Consider the following 347-residue polypeptide: Farnesyl pyrophosphate synthase (347 aa).

Lys50, Arg53, and Gln88 together coordinate isopentenyl diphosphate. Asp95 and Asp99 together coordinate Mg(2+). Arg104 lines the dimethylallyl diphosphate pocket. Arg105 contributes to the isopentenyl diphosphate binding site. Residues Lys192, Thr193, Gln232, Lys249, and Lys258 each contribute to the dimethylallyl diphosphate site.

The protein belongs to the FPP/GGPP synthase family. In terms of assembly, interacts with spo9. The cofactor is Mg(2+).

The protein localises to the cytoplasm. It localises to the nucleus. It catalyses the reaction isopentenyl diphosphate + dimethylallyl diphosphate = (2E)-geranyl diphosphate + diphosphate. The catalysed reaction is isopentenyl diphosphate + (2E)-geranyl diphosphate = (2E,6E)-farnesyl diphosphate + diphosphate. It functions in the pathway isoprenoid biosynthesis; farnesyl diphosphate biosynthesis; farnesyl diphosphate from geranyl diphosphate and isopentenyl diphosphate: step 1/1. It participates in isoprenoid biosynthesis; geranyl diphosphate biosynthesis; geranyl diphosphate from dimethylallyl diphosphate and isopentenyl diphosphate: step 1/1. In terms of biological role, farnesyl pyrophosphate synthase; part of the second module of ergosterol biosynthesis pathway that includes the middle steps of the pathway. Fps1 catalyzes the sequential condensation of isopentenyl pyrophosphate with dimethylallyl pyrophosphate, and then with the resultant geranylpyrophosphate to the ultimate product farnesyl pyrophosphate. The second module is carried out in the vacuole and involves the formation of farnesyl diphosphate, which is also an important intermediate in the biosynthesis of ubiquinone, dolichol, heme and prenylated proteins. Activity by the mevalonate kinase erg12 first converts mevalonate into 5-phosphomevalonate. 5-phosphomevalonate is then further converted to 5-diphosphomevalonate by the phosphomevalonate kinase erg8. The diphosphomevalonate decarboxylase mvd1 then produces isopentenyl diphosphate. The isopentenyl-diphosphate delta-isomerase idi1 then catalyzes the 1,3-allylic rearrangement of the homoallylic substrate isopentenyl (IPP) to its highly electrophilic allylic isomer, dimethylallyl diphosphate (DMAPP). Finally the farnesyl diphosphate synthase fps1 catalyzes the sequential condensation of isopentenyl pyrophosphate with dimethylallyl pyrophosphate, and then with the resultant geranylpyrophosphate to the ultimate product farnesyl pyrophosphate. This Schizosaccharomyces pombe (strain 972 / ATCC 24843) (Fission yeast) protein is Farnesyl pyrophosphate synthase.